A 475-amino-acid chain; its full sequence is Gamma-aminobutyric acid receptor subunit gamma-2 (475 aa).

The signal sequence occupies residues methionine 1–serine 39. Topologically, residues glutamine 40–phenylalanine 275 are extracellular. N-linked (GlcNAc...) asparagine glycans are attached at residues asparagine 52 and asparagine 129. Cysteine 190 and cysteine 204 form a disulfide bridge. Asparagine 247 carries N-linked (GlcNAc...) asparagine glycosylation. The chain crosses the membrane as a helical span at residues threonine 276 to isoleucine 296. The Cytoplasmic portion of the chain corresponds to asparagine 297 to proline 302. Residues alanine 303 to alanine 322 form a helical membrane-spanning segment. Residues arginine 323–alanine 334 are Extracellular-facing. The chain crosses the membrane as a helical span at residues methionine 335 to phenylalanine 359. The Cytoplasmic portion of the chain corresponds to valine 360 to serine 451. The interaction with GABARAP stretch occupies residues arginine 433 to aspartate 450. The chain crosses the membrane as a helical span at residues tyrosine 452–tyrosine 472. Residues leucine 473 to leucine 475 lie on the Extracellular side of the membrane.

Belongs to the ligand-gated ion channel (TC 1.A.9) family. Gamma-aminobutyric acid receptor (TC 1.A.9.5) subfamily. GABRG2 sub-subfamily. Heteropentamer, formed by a combination of alpha (GABRA1-6), beta (GABRB1-3), gamma (GABRG1-3), delta (GABRD), epsilon (GABRE), rho (GABRR1-3), pi (GABRP) and theta (GABRQ) chains, each subunit exhibiting distinct physiological and pharmacological properties. Interacts with GABARAP. Interacts with KIF21B. Identified in a complex of 720 kDa composed of LHFPL4, NLGN2, GABRA1, GABRB2, GABRG2 and GABRB3. Interacts with LHFPL4. Interacts with SHISA7; interaction leads to the regulation of GABA(A) receptor trafficking, channel deactivation kinetics and pharmacology. Palmitoylated by ZDHHC3/GODZ; required for the accumulation of GABA(A) receptors at the postsynaptic membrane of inhibitory GABAergic synapses.

It is found in the postsynaptic cell membrane. The protein resides in the cell membrane. It localises to the cell projection. Its subcellular location is the dendrite. The protein localises to the cytoplasmic vesicle membrane. The catalysed reaction is chloride(in) = chloride(out). With respect to regulation, allosterically activated by benzodiazepines. Activated by pentobarbital. Potentiated by etomidate, propofol, pregnanolone. Inhibited by the antagonist bicuculline. Inhibited by zinc ions. Potentiated by histamine. In terms of biological role, gamma subunit of the heteropentameric ligand-gated chloride channel gated by gamma-aminobutyric acid (GABA), a major inhibitory neurotransmitter in the brain. GABA-gated chloride channels, also named GABA(A) receptors (GABAAR), consist of five subunits arranged around a central pore and contain GABA active binding site(s) located at the alpha and beta subunit interface(s). When activated by GABA, GABAARs selectively allow the flow of chloride anions across the cell membrane down their electrochemical gradient. Gamma-2/GABRG2-containing GABAARs are found at both synaptic and extrasynaptic sites. Chloride influx into the postsynaptic neuron following GABAAR opening decreases the neuron ability to generate a new action potential, thereby reducing nerve transmission. GABAARs containing alpha-1 and beta-2 or -3 subunits exhibit synaptogenic activity; the gamma-2 subunit being necessary but not sufficient to induce rapid synaptic contacts formation. Extrasynaptic gamma-2-containing receptors contribute to the tonic GABAergic inhibition. GABAARs function also as histamine receptor where histamine binds at the interface of two neighboring beta subunits and potentiates GABA response in a gamma-2 subunit-controlled manner. In Homo sapiens (Human), this protein is Gamma-aminobutyric acid receptor subunit gamma-2.